The primary structure comprises 351 residues: Nitronate monooxygenase (351 aa).

FMN contacts are provided by residues L21, N69, Q176, G181, G218, and 237-240 (QMGT).

This sequence belongs to the nitronate monooxygenase family. NMO class I subfamily. It depends on FMN as a cofactor.

It carries out the reaction 3 propionate 3-nitronate + 3 O2 + H2O = 3 3-oxopropanoate + 2 nitrate + nitrite + H2O2 + 3 H(+). Its function is as follows. Nitronate monooxygenase that uses molecular oxygen to catalyze the oxidative denitrification of alkyl nitronates. The toxin propionate 3-nitronate (P3N) is the best substrate (and the presumed physiological substrate), but this enzyme is also active on other primary and secondary nitronates such as propyl-1-nitronate, ethylnitronate, pentyl-1-nitronate, butyl-1-nitronate and propyl-2-nitronate. Is likely involved in the degradation of P3N, that allows P.aeruginosa PAO1 to grow on 3-nitropropionate/P3N as the sole nitrogen source. Also functions in the detoxification of P3N, a metabolic poison produced by plants and fungi as a defense mechanism. Cannot oxidize nitroalkanes such as 3-nitropropionate, nitroethane, 1-nitropropane, 1-nitrobutane, 1-nitropentane, or 2-nitropropane. The chain is Nitronate monooxygenase from Pseudomonas aeruginosa (strain ATCC 15692 / DSM 22644 / CIP 104116 / JCM 14847 / LMG 12228 / 1C / PRS 101 / PAO1).